A 403-amino-acid polypeptide reads, in one-letter code: Histidine--tRNA ligase (403 aa).

It belongs to the class-II aminoacyl-tRNA synthetase family. In terms of assembly, homodimer.

The protein resides in the cytoplasm. It catalyses the reaction tRNA(His) + L-histidine + ATP = L-histidyl-tRNA(His) + AMP + diphosphate + H(+). This Aquifex aeolicus (strain VF5) protein is Histidine--tRNA ligase (hisS).